Here is a 184-residue protein sequence, read N- to C-terminus: GTP cyclohydrolase 1 (184 aa).

Positions 75, 78, and 146 each coordinate Zn(2+).

It belongs to the GTP cyclohydrolase I family. In terms of assembly, toroid-shaped homodecamer, composed of two pentamers of five dimers.

The catalysed reaction is GTP + H2O = 7,8-dihydroneopterin 3'-triphosphate + formate + H(+). The protein operates within cofactor biosynthesis; 7,8-dihydroneopterin triphosphate biosynthesis; 7,8-dihydroneopterin triphosphate from GTP: step 1/1. The polypeptide is GTP cyclohydrolase 1 (Pseudoalteromonas atlantica (strain T6c / ATCC BAA-1087)).